The sequence spans 143 residues: Regulator of ribonuclease activity B (143 aa).

The segment covering 117 to 135 has biased composition (acidic residues); the sequence is DPDAEYDDEDGENEDDESE. A disordered region spans residues 117–143; the sequence is DPDAEYDDEDGENEDDESESDKSSRLH.

It belongs to the RraB family. As to quaternary structure, interacts with the C-terminal region of Rne.

It localises to the cytoplasm. Globally modulates RNA abundance by binding to RNase E (Rne) and regulating its endonucleolytic activity. Can modulate Rne action in a substrate-dependent manner by altering the composition of the degradosome. This chain is Regulator of ribonuclease activity B, found in Proteus mirabilis (strain HI4320).